The primary structure comprises 262 residues: NADPH-dependent 7-cyano-7-deazaguanine reductase (262 aa).

69–71 (IES) is a substrate binding site. Residue 71-72 (SK) participates in NADPH binding. C170 acts as the Thioimide intermediate in catalysis. Catalysis depends on D177, which acts as the Proton donor. Substrate is bound at residue 209–210 (HE). 238 to 239 (RG) lines the NADPH pocket.

The protein belongs to the GTP cyclohydrolase I family. QueF type 2 subfamily. As to quaternary structure, homodimer.

The protein resides in the cytoplasm. The enzyme catalyses 7-aminomethyl-7-carbaguanine + 2 NADP(+) = 7-cyano-7-deazaguanine + 2 NADPH + 3 H(+). It functions in the pathway tRNA modification; tRNA-queuosine biosynthesis. Its function is as follows. Catalyzes the NADPH-dependent reduction of 7-cyano-7-deazaguanine (preQ0) to 7-aminomethyl-7-deazaguanine (preQ1). This chain is NADPH-dependent 7-cyano-7-deazaguanine reductase, found in Buchnera aphidicola subsp. Schizaphis graminum (strain Sg).